The sequence spans 437 residues: GTPase Obg (437 aa).

Positions 2-160 (SMFLDTAKIS…RQLELELKIL (159 aa)) constitute an Obg domain. The region spanning 161-338 (ADVGLVGFPS…LLEATAELLA (178 aa)) is the OBG-type G domain. GTP contacts are provided by residues 167–174 (GFPSVGKS), 192–196 (FTTIV), 214–217 (DLPG), 284–287 (NKMD), and 319–321 (SSL). Mg(2+) contacts are provided by Ser174 and Thr194. Residues 359 to 437 (GFAETEKDFE…IGKFEFEFVD (79 aa)) form the OCT domain.

Belongs to the TRAFAC class OBG-HflX-like GTPase superfamily. OBG GTPase family. As to quaternary structure, monomer. Requires Mg(2+) as cofactor.

The protein localises to the cytoplasm. Functionally, an essential GTPase which binds GTP, GDP and possibly (p)ppGpp with moderate affinity, with high nucleotide exchange rates and a fairly low GTP hydrolysis rate. Plays a role in control of the cell cycle, stress response, ribosome biogenesis and in those bacteria that undergo differentiation, in morphogenesis control. The polypeptide is GTPase Obg (Streptococcus pyogenes serotype M4 (strain MGAS10750)).